The following is a 586-amino-acid chain: Mitochondrial tRNA methylthiotransferase CDK5RAP1 (586 aa).

A mitochondrion-targeting transit peptide spans M1–A30. A disordered region spans residues A68–D90. The region spanning R97–S217 is the MTTase N-terminal domain. [4Fe-4S] cluster contacts are provided by C106, C142, C180, C255, C259, and C262. The Radical SAM core domain maps to S241 to K495. One can recognise a TRAM domain in the interval A498–C573.

Belongs to the methylthiotransferase family. MiaB subfamily. Interacts with CDK5R1 (p35 form). CDK5RAP1, CDK5RAP2 and CDK5RAP3 show competitive binding to CDK5R1. Forms a complex with CDK5R1 and CDK5. Requires [4Fe-4S] cluster as cofactor. As to expression, expressed in brain.

It is found in the mitochondrion inner membrane. It catalyses the reaction N(6)-dimethylallyladenosine(37) in tRNA + (sulfur carrier)-SH + AH2 + 2 S-adenosyl-L-methionine = 2-methylsulfanyl-N(6)-dimethylallyladenosine(37) in tRNA + (sulfur carrier)-H + 5'-deoxyadenosine + L-methionine + A + S-adenosyl-L-homocysteine + 2 H(+). Its function is as follows. Methylthiotransferase that catalyzes the conversion of N6-(dimethylallyl)adenosine (i(6)A) to 2-methylthio-N6-(dimethylallyl)adenosine (ms(2)i(6)A) at position 37 (adjacent to the 3'-end of the anticodon) of four mitochondrial DNA-encoded tRNAs (Ser(UCN), Phe, Tyr and Trp). Essential for efficient and highly accurate protein translation by the ribosome. Specifically inhibits CDK5 activation by CDK5R1. Essential for efficient mitochondrial protein synthesis and respiratory chain. This is Mitochondrial tRNA methylthiotransferase CDK5RAP1 (Cdk5rap1) from Rattus norvegicus (Rat).